The primary structure comprises 878 residues: Pyruvate, phosphate dikinase (878 aa).

Positions 1 to 347 (MKKLIYYFGS…LYILQTRTAK (347 aa)) are N-terminal. Arg-96 is a binding site for ATP. The tract at residues 348–404 (RTAIAAINIAVQMVEEKLISKEQALMRIDPESLNQLLHTRIDYSKGLTSIAEGLPAS) is linker 1. The central stretch occupies residues 405-502 (PGAATGIAVF…VIKQGDIITI (98 aa)). At Thr-457 the chain carries Phosphothreonine; by PDRP1. His-459 acts as the Tele-phosphohistidine intermediate in catalysis. Residues 503-537 (DGGSGKIFLGEMPLIQPTFSEESKLILDWADEISS) form a linker 2 region. Positions 538 to 878 (LKVRANAETV…AAAQAKIKHG (341 aa)) are C-terminal. Positions 565, 621, 749, 770, 771, 772, and 773 each coordinate substrate. Position 749 (Glu-749) interacts with Mg(2+). Asp-773 lines the Mg(2+) pocket. The Proton donor role is filled by Cys-835.

It belongs to the PEP-utilizing enzyme family. Homodimer. Requires Mg(2+) as cofactor. Phosphorylation of Thr-457 in the dark inactivates the enzyme. Dephosphorylation upon light stimulation reactivates the enzyme.

The enzyme catalyses pyruvate + phosphate + ATP = phosphoenolpyruvate + AMP + diphosphate + H(+). With respect to regulation, activated by light-induced dephosphorylation. Inhibited by dark-induced phosphorylation. Both reactions are catalyzed by PDRP1. Functionally, catalyzes the reversible phosphorylation of pyruvate and phosphate. The protein is Pyruvate, phosphate dikinase (ppdK) of Rickettsia conorii (strain ATCC VR-613 / Malish 7).